Reading from the N-terminus, the 561-residue chain is Carbohydrate sulfotransferase 15 (561 aa).

Over 1–80 (MRHCINCCIQ…FLRFKKGKRC (80 aa)) the chain is Cytoplasmic. The chain crosses the membrane as a helical; Signal-anchor for type II membrane protein span at residues 81–101 (SLVFGLIIMTLVMASYILSGA). At 102-561 (HQELLISSPF…ADEAFAWKTT (460 aa)) the chain is on the lumenal side. Residue 263–267 (KCGTT) coordinates 3'-phosphoadenylyl sulfate. The N-linked (GlcNAc...) asparagine glycan is linked to asparagine 364. 2 residues coordinate 3'-phosphoadenylyl sulfate: arginine 392 and serine 400.

Belongs to the sulfotransferase 1 family. Homodimer; disulfide-linked (Potential). The relevance of homodimerization is however unsure. May interact with phosphorylated proteins in resting B-cells, including HCK. A divalent metal cation is required as a cofactor. The cofactor is glutathione. Glycosylated. Expressed in B-cell-enriched tissues but not in fetal or adult thymus. Expressed in fetal and adult spleen, lymph node, tonsil, bone marrow and peripheral leukocytes. Not expressed in T-cells. In pro-B, pre-B, and mature B-cell lines, it colocalizes with RAG1.

Its subcellular location is the golgi apparatus membrane. The catalysed reaction is dermatan 4'-sulfate + n 3'-phosphoadenylyl sulfate = dermatan 4',6'-bissulfate + n adenosine 3',5'-bisphosphate + n H(+). It carries out the reaction chondroitin 4'-sulfate + n 3'-phosphoadenylyl sulfate = chondroitin 4',6'-bissulfate + n adenosine 3',5'-bisphosphate + n H(+). With respect to regulation, inhibited by phenyl beta-GalNAc(4,6-SO(4)). Functionally, sulfotransferase that transfers sulfate from 3'-phosphoadenosine 5'-phosphosulfate (PAPS) to the C-6 hydroxyl group of the GalNAc 4-sulfate residue of chondroitin sulfate A and forms chondroitin sulfate E containing GlcA-GalNAc(4,6-SO(4)) repeating units. It also transfers sulfate to a unique non-reducing terminal sequence, GalNAc(4SO4)-GlcA(2SO4)-GalNAc(6SO4), to yield a highly sulfated structure similar to the structure found in thrombomodulin chondroitin sulfate. May also act as a B-cell receptor involved in BCR ligation-mediated early activation that mediate regulatory signals key to B-cell development and/or regulation of B-cell-specific RAG expression; however such results are unclear in vivo. The sequence is that of Carbohydrate sulfotransferase 15 (CHST15) from Homo sapiens (Human).